Reading from the N-terminus, the 96-residue chain is MNLRPLHDRVIVKRLDQETKTASGIVIPDAAAEKPDQGEVLAVGPGKRDDKGAPIALDVKVGDRVLFGKYAGQTVKVDGNELLVMREEDIMAVVNK.

It belongs to the GroES chaperonin family. As to quaternary structure, heptamer of 7 subunits arranged in a ring. Interacts with the chaperonin GroEL.

Its subcellular location is the cytoplasm. Its function is as follows. Together with the chaperonin GroEL, plays an essential role in assisting protein folding. The GroEL-GroES system forms a nano-cage that allows encapsulation of the non-native substrate proteins and provides a physical environment optimized to promote and accelerate protein folding. GroES binds to the apical surface of the GroEL ring, thereby capping the opening of the GroEL channel. The sequence is that of Co-chaperonin GroES from Paraburkholderia phymatum (strain DSM 17167 / CIP 108236 / LMG 21445 / STM815) (Burkholderia phymatum).